Consider the following 413-residue polypeptide: Putative glutamate synthase [NADPH] small chain (413 aa).

[4Fe-4S] cluster is bound by residues Cys33, Cys37, Cys43, and Cys47.

In terms of assembly, aggregate of 4 catalytic active heterodimers, consisting of a large and a small subunit. The cofactor is [4Fe-4S] cluster.

The enzyme catalyses 2 L-glutamate + NADP(+) = L-glutamine + 2-oxoglutarate + NADPH + H(+). It functions in the pathway amino-acid biosynthesis; L-glutamate biosynthesis via GLT pathway; L-glutamate from 2-oxoglutarate and L-glutamine (NADP(+) route): step 1/1. Its pathway is energy metabolism; nitrogen metabolism. The protein is Putative glutamate synthase [NADPH] small chain (gltD) of Cereibacter sphaeroides (Rhodobacter sphaeroides).